A 728-amino-acid polypeptide reads, in one-letter code: MEYKYSTIVDKSKWDPEGLTEGIPLRRHEAGDLEEVGSFRVQEDWRRLVGPLENPYRGSLGPEISFITYTVPECLPERLEAISYSLDYGFMHDDEIDLNIASAELSDVGGALKQGGATGKIDEGKSSSGKRKMAAQLLREMMALDPERAMALAKSWAQGVQHSARRVEEKDWKSLDEYIPFRCMDLGYMHWHGLVTFGCAITVPEEEEEERRRLLEPAVIACMMTNDLFSYEKEKNDNNPQNAVTVIMKINKCGEEEAKEVCKKRIRVECAKYAQIVKETLARTDISLDLKKYIEIMQYTVSGNWAWSTQCPRYHFPGRWNELQKLRAEHGIAKYPARYSLKERTNGVNGVNGVNGINGTNGINGTNGVNGKRNRDEDGDENDARINGNGFKKPALTSQGKDSFVLDDVVALSLNLHLPDLGDGVVLQPYRYLTSLPSKGFRDMAIDALNTWLRVPSTSTSTIKDLIKKLHSASLMLDDIEDNSPLRRAKPSTHIIYGNAQTINSATYQYTEATSLAANLSNPLSLRIFLDEIQQLYIGQSYDLYWTHNALCPSITEYLRMVDQKTGGLFRMLTRLMVAESPGSNKILDRALFPLSHLIGRFFQIRDDYQNLSSAEYSRQKGFVEDLDEGKYSFTLIHCIQTVEANEALASEMMALRAFLIKRRVDGGLSNEAKMEVLGIMKKTKSLEYTLGVLRALQEELEREVGRLEGKFGEENLPLRLMVDMLKV.

The (7Z)-ophiobola-7,19-dien-3-ol synthase stretch occupies residues methionine 1 to glutamate 322. Residues aspartate 93 and aspartate 97 each contribute to the Mg(2+) site. Residue aspartate 93 coordinates substrate. A DDXXD 1 motif is present at residues aspartate 93–aspartate 97. Substrate is bound by residues arginine 182–aspartate 185, asparagine 226, serine 230–glutamate 234, and arginine 313–tyrosine 314. The short motif at asparagine 226 to glutamate 234 is the NSE/DTE element. The interval leucine 323–valine 728 is geranylfarnesyl diphosphate synthase. Over residues glycine 362–glycine 371 the composition is skewed to low complexity. Residues glycine 362–proline 394 are disordered. Isopentenyl diphosphate-binding residues include lysine 439, arginine 442, and histidine 471. The Mg(2+) site is built by aspartate 478 and aspartate 482. The DDXXD 2 signature appears at aspartate 478–aspartate 482. Arginine 487 serves as a coordination point for dimethylallyl diphosphate. Arginine 488 contributes to the isopentenyl diphosphate binding site. Lysine 565, threonine 566, glutamine 604, asparagine 611, lysine 621, and lysine 631 together coordinate dimethylallyl diphosphate.

It in the N-terminal section; belongs to the terpene synthase family. In the C-terminal section; belongs to the FPP/GGPP synthase family. Mg(2+) is required as a cofactor.

It catalyses the reaction isopentenyl diphosphate + (2E,6E)-farnesyl diphosphate = (2E,6E,10E)-geranylgeranyl diphosphate + diphosphate. The enzyme catalyses isopentenyl diphosphate + (2E,6E,10E)-geranylgeranyl diphosphate = (2E,6E,10E,14E)-geranylfarnesyl diphosphate + diphosphate. It carries out the reaction (2E,6E,10E,14E)-geranylfarnesyl diphosphate + H2O = ophiobolin F + diphosphate. It functions in the pathway secondary metabolite biosynthesis; terpenoid biosynthesis. In terms of biological role, bifunctional sesterterpene synthase; part of the gene cluster that mediates the biosynthesis of the sesterterpenes ophiobolins, fungal phytotoxins with potential anti-cancer activities. The first step of the pathway is performed by the sesterterpene synthase oblA that possesses both prenyl transferase and terpene cyclase activity, converting isopentenyl diphosphate and dimethylallyl diphosphate into geranylfarnesyl diphosphate (GFPP) and further converting GFPP into ophiobolin F, respectively. Other sesterterpenoids (C(25) terpenoids) are found as minor products of oblA. The cytochrome P450 monooxygenase oblB then catalyzes a four-step oxidative transformation of ophiobolin F to yield ophiobolin C. The function of the cytochrome P450 monooxygenase oblE has still to be determined. The sequence is that of Ophiobolin F synthase oblA from Emericella variicolor (Aspergillus stellatus).